The following is a 529-amino-acid chain: Bifunctional purine biosynthesis protein PurH (529 aa).

Residues 3 to 149 (DRIPLKRALI…KNHAFVTVVV (147 aa)) enclose the MGS-like domain.

Belongs to the PurH family.

It catalyses the reaction (6R)-10-formyltetrahydrofolate + 5-amino-1-(5-phospho-beta-D-ribosyl)imidazole-4-carboxamide = 5-formamido-1-(5-phospho-D-ribosyl)imidazole-4-carboxamide + (6S)-5,6,7,8-tetrahydrofolate. It carries out the reaction IMP + H2O = 5-formamido-1-(5-phospho-D-ribosyl)imidazole-4-carboxamide. It functions in the pathway purine metabolism; IMP biosynthesis via de novo pathway; 5-formamido-1-(5-phospho-D-ribosyl)imidazole-4-carboxamide from 5-amino-1-(5-phospho-D-ribosyl)imidazole-4-carboxamide (10-formyl THF route): step 1/1. The protein operates within purine metabolism; IMP biosynthesis via de novo pathway; IMP from 5-formamido-1-(5-phospho-D-ribosyl)imidazole-4-carboxamide: step 1/1. This chain is Bifunctional purine biosynthesis protein PurH, found in Paracoccus denitrificans (strain Pd 1222).